Here is a 92-residue protein sequence, read N- to C-terminus: Small ribosomal subunit protein uS19 (92 aa).

Belongs to the universal ribosomal protein uS19 family.

Its function is as follows. Protein S19 forms a complex with S13 that binds strongly to the 16S ribosomal RNA. The sequence is that of Small ribosomal subunit protein uS19 from Shewanella halifaxensis (strain HAW-EB4).